A 1968-amino-acid polypeptide reads, in one-letter code: MAVTYRTPMEDIVNCFEPATQAVIANSAATLYKNFEEQHCQYFNYYLSPLAKRKLSMAGIYLSPYSAVVHSHPVCKTLENYILYSVLPSYINSSFYFVGIKERKLQLLKSKCKNLDSVQVVNRYVTSADRMRYTNDFVPYGSYEHECLVHKGVGLDNEALRGLVGPLRRHKAKNLFFHDELHYWSSKVLIDFLDVMRPDKLLGTVVYPPELLFKPTRSLNEWCYTYDIVGDTLMFFPDGVQSEGYQQPLKGGYLLGARSLKLPDGTVYMVDVLCSKFPHHLISITKGEAAAPTHRAFGPFEAVASEALKATLSPDYPCAFPVSYEVVNKIYRYLRTLKKPDEQSAIAKLSQIIAEPSGREIDFVECFARLVIHNSSMCATIMPEQLKEFMGNWLGKMPSVLARRFSSVRAVCVNKFIRGLKPYSFTLRLNEITWWNIWENSYAWFFDTDAEVDVPEKLDSLFMGEGAGLVAHITSRPYVGTVPLADREWNALLCMDSQKLLHAMRRMFMRGAWGAHMCVISREFLLKYVEARLKSSCLIAKARRRGQHKEKLEAWEVLGLKSSDALFRAMTYLCNARLEPMFSESGLRFFLTRGRNNLYGLTNYTEGKRAVTGVQNLWSNVVHEVSTKRHKGMIRLEKARVTEQPRSEFASCVLEPEVWRDVEAALDIELGEVACACNARFVQGVVLSNQAGLNVREQVAGASVGLYTKDRSNLKWGNSELLSNGWGRSLSVWMEINSVSQKFDVAVRLSYSKETQMNVLLPSLDGIERGAGATVVNLRKCGAFIVRCARGWRLALAWMDHICLEVMANVAYGHECYMRSWGTMDVVVFLKRATVSEQVTFESAQEVGPIEGKSDSGAPGVGVNLDLGGVVGSEYPANGAERYKRVSGPGDGCCCWHSFAYLVGMHHMELKRLCTSHVFENAALNVELEQCKASGAFVTHAAILATALRLRAEIRVHNAGTGRVHRFAPKQKNMALDLWLESEHYEPQVLRNGCVIESVAQALGTRNADILAVVEERCCEEVVESVQAGLGLNLHHVEIVLQCFDIVGHCNLGDKEITLNAGGKMPFCFDISDEHMSFCGRRKDPICKLVSGALHGKMFAESALLDLENCGLKIDFEPNWNRAGMLADSMYQGATGVLGSALFNNKRNMREKFVRNVSLSLHAIVGTFGSGKSTLFKNLLKYGAGKSLDFVSPRRALAEDFKRTVGMNERGGRAKAGQENWRVTTLETFLARVEFLTEGQVVILDEMQLYPPGYFDLVVSMLKVDVRLFLVGDPAQSDYDSEKDRLVLGAMEENMSVVLGAREYNYKVRSHRFLNCNFIGRLPCEINKDDCTIDEPHIMRMHLENLLDVAEEYKSVVLVSSFDEKMVVCAHLPEAKVLTFGESTGLTFMHGTIYISAVSERTNERRWITALRRFRFNLCFVNCSGMDYQQLAGRYKGRVRSKFLCKTAIPDDLNSMLPGQALFKSEYPRLIGKDEGVREEKLAGDPWLKTMINLYQAPEVEIAEEPEVVMQEEWFRTHLPRDELESVRAQWVHKILAKEYREVRMGDMVSEQFTHDHTKQLGAKQLTNAAERFETIYPRHRASDTVTFLMAVKKRLSFSNPGKEKGNLFHAASYGKALLSEFLKRVPLKPNHNVRFMEEALWNFEEKKLSKSAATIENHSGRSCRDWPTDVAQIFSKSQLCTKFDNRFRVAKAAQSIVCFQHAVLCRFAPYMRYIEMKVHEVLPKNYYIHSGKGLEELDAWVKKGKFDRICTESDYEAFDASQDEFIMAFELELMKYLRLPSDLIEDYKFIKTSLGSKLGNFAIMRFSGEASTFLFNTLANMLFTFMRYNIRGDEFICFAGDDMCASRRLQPTKKFAHFLDKLKLKAKVQFVQFVNKPTFCGWHLCPDGIYKKPQLVLERMCIAKEMNNLSNCIDNYAIEVAYAYKLGEKAVNRMDEEEVAAFYNCVRIIVRNKHLIRSDVKQVFEVL.

Residues 63-254 (SPYSAVVHSH…YQQPLKGGYL (192 aa)) form the Alphavirus-like MT domain. Residues 883–991 (YKRVSGPGDG…SEHYEPQVLR (109 aa)) form the OTU domain. Residues 990 to 1080 (LRNGCVIESV…ISDEHMSFCG (91 aa)) enclose the Peptidase C23 domain. Active-site residues include Cys-994 and His-1075. One can recognise a (+)RNA virus helicase ATP-binding domain in the interval 1134–1316 (ATGVLGSALF…KVRSHRFLNC (183 aa)). ATP is bound at residue 1166–1173 (GTFGSGKS). A (+)RNA virus helicase C-terminal domain is found at 1317 to 1454 (NFIGRLPCEI…CKTAIPDDLN (138 aa)). Positions 1749–1856 (RICTESDYEA…SRRLQPTKKF (108 aa)) constitute a RdRp catalytic domain.

This sequence belongs to the potexviruses/carlaviruses RNA replication protein family. Specific enzymatic cleavages by the viral protease yield mature proteins.

The catalysed reaction is RNA(n) + a ribonucleoside 5'-triphosphate = RNA(n+1) + diphosphate. It carries out the reaction ATP + H2O = ADP + phosphate + H(+). RNA-directed RNA polymerase involved in viral RNA replication. Its function is as follows. Protease: Thiol protease that cleaves the polyprotein. The sequence is that of RNA replication polyprotein from Solanum tuberosum (Potato).